The following is a 346-amino-acid chain: MVSSNFYKNLGPRKLTAIIDFLHDIIEPPKIHEDIAIHDIKILQEASPNDISFLSNPKYSEFLKTTKAAACIVPKNFTGEANPNTVLIHAENSYFAYGKLIDFFYTPIKSYPAKIMKSAIVADSATIGKNCYIGHNVVIEDDVIIGDNSIIEAGSFIGRGVTIGRNARIEQHVSINYTIIGDEVVILAGAKIGQDGFGFSTEKGVHHKIFHIGIVKIGNNVEIGSNITIDRGSLQDTIIEDLCRIDNLVQIGHGVKIGKGSIIVAQAGIAGSSTIGKYCALGGQVGIAGHLNIGDGTQVAAQGGVAQNIEAGKIVGGSPAVPIMDWHRQSIIMKQLVKTSNSKLKK.

The active-site Proton acceptor is the His-253.

It belongs to the transferase hexapeptide repeat family. LpxD subfamily. As to quaternary structure, homotrimer.

It catalyses the reaction a UDP-3-O-[(3R)-3-hydroxyacyl]-alpha-D-glucosamine + a (3R)-hydroxyacyl-[ACP] = a UDP-2-N,3-O-bis[(3R)-3-hydroxyacyl]-alpha-D-glucosamine + holo-[ACP] + H(+). The protein operates within bacterial outer membrane biogenesis; LPS lipid A biosynthesis. Catalyzes the N-acylation of UDP-3-O-acylglucosamine using 3-hydroxyacyl-ACP as the acyl donor. Is involved in the biosynthesis of lipid A, a phosphorylated glycolipid that anchors the lipopolysaccharide to the outer membrane of the cell. In Rickettsia felis (strain ATCC VR-1525 / URRWXCal2) (Rickettsia azadi), this protein is UDP-3-O-acylglucosamine N-acyltransferase.